We begin with the raw amino-acid sequence, 158 residues long: MLP-like protein 43 (158 aa).

A2 is subject to N-acetylalanine.

This sequence belongs to the MLP family.

This Arabidopsis thaliana (Mouse-ear cress) protein is MLP-like protein 43 (MLP43).